The following is a 270-amino-acid chain: Putative phosphoenolpyruvate synthase regulatory protein (270 aa).

150 to 157 (GVSRCGKT) lines the ADP pocket.

It belongs to the pyruvate, phosphate/water dikinase regulatory protein family. PSRP subfamily.

The enzyme catalyses [pyruvate, water dikinase] + ADP = [pyruvate, water dikinase]-phosphate + AMP + H(+). It catalyses the reaction [pyruvate, water dikinase]-phosphate + phosphate + H(+) = [pyruvate, water dikinase] + diphosphate. Its function is as follows. Bifunctional serine/threonine kinase and phosphorylase involved in the regulation of the phosphoenolpyruvate synthase (PEPS) by catalyzing its phosphorylation/dephosphorylation. This Shewanella halifaxensis (strain HAW-EB4) protein is Putative phosphoenolpyruvate synthase regulatory protein.